The chain runs to 58 residues: Small integral membrane protein 11 (58 aa).

The chain crosses the membrane as a helical span at residues 9–29 (FPLLLYILAAKTLILCLAFAG). Positions 29–58 (GVKVYQRKRLEAKQQKVEAEKRKQAEKKES) form a coiled coil.

It localises to the membrane. The polypeptide is Small integral membrane protein 11 (SMIM11) (Bos taurus (Bovine)).